Here is a 1574-residue protein sequence, read N- to C-terminus: Plexin-C1 (1574 aa).

Positions 1 to 34 are cleaved as a signal peptide; sequence MEVSRRKTPPRPPYPAAPLPLIAYLLALAAPARG. A Sema domain is found at 35–452; it reads ADEPVWRSEQ…AGKEVRRIPV (418 aa). The Extracellular segment spans residues 35–950; the sequence is ADEPVWRSEQ…YVEQESVPST (916 aa). A disulfide bond links C64 and C87. N-linked (GlcNAc...) asparagine glycans are attached at residues N86, N143, and N149. Cysteines 156 and 194 form a disulfide. N-linked (GlcNAc...) asparagine glycosylation is present at N252. Residues C283 and C329 are joined by a disulfide bond. Residues N386 and N407 are each glycosylated (N-linked (GlcNAc...) asparagine). Disulfide bonds link C455–C472, C461–C506, C464–C481, and C475–C487. N694, N773, and N802 each carry an N-linked (GlcNAc...) asparagine glycan. The chain crosses the membrane as a helical span at residues 951–971; it reads WYFLIALPILLAIVIVVAVVV. Topologically, residues 972-1574 are cytoplasmic; it reads TRYKSKELSR…FDEKKKCKWM (603 aa). At S984 the chain carries Phosphoserine.

It belongs to the plexin family. Monomer. Homodimer. Interacts with SEMA7A. In terms of tissue distribution, detected on dendritic cells, skin Langerhans cells and neutrophils (at protein level).

Its subcellular location is the membrane. Its function is as follows. Receptor for SEMA7A, for vaccinia virus semaphorin A39R and for herpesvirus Sema protein. Binding of semaphorins triggers cellular responses leading to the rearrangement of the cytoskeleton and to secretion of IL6 and IL8. The protein is Plexin-C1 (Plxnc1) of Mus musculus (Mouse).